The chain runs to 366 residues: Patr class I histocompatibility antigen, C alpha chain (366 aa).

The N-terminal stretch at 1-24 (MRVTAPRTLLLLLSGGLALTETWA) is a signal peptide. Residues 25 to 114 (GSHSLRYFDT…LRGYYNQSED (90 aa)) form an alpha-1 region. At 25–308 (GSHSLRYFDT…KPTSQPTIPI (284 aa)) the chain is on the extracellular side. Residue Asn110 is glycosylated (N-linked (GlcNAc...) asparagine). Residues 115–206 (GSHTLQWMYG…ENGKETLQRT (92 aa)) are alpha-2. 2 disulfide bridges follow: Cys125–Cys192 and Cys227–Cys283. Residues 207–298 (ECPKTHMTHH…GLPEPLTLRW (92 aa)) are alpha-3. The Ig-like C1-type domain occupies 209–297 (PKTHMTHHPV…EGLPEPLTLR (89 aa)). Residues 299–308 (KPTSQPTIPI) form a connecting peptide region. The chain crosses the membrane as a helical span at residues 309–332 (VGIVAGLAVLAVLAVLGAVVTAMM). Topologically, residues 333-366 (CRRKSSGGKGGSCSQAACSNSAQGSDESLIACKA) are cytoplasmic. 2 positions are modified to phosphoserine: Ser357 and Ser360.

This sequence belongs to the MHC class I family. Heterodimer of an alpha chain and a beta chain (beta-2-microglobulin).

The protein localises to the membrane. Involved in the presentation of foreign antigens to the immune system. This is Patr class I histocompatibility antigen, C alpha chain from Pan troglodytes (Chimpanzee).